The chain runs to 100 residues: Small ribosomal subunit protein uS14c (100 aa).

It belongs to the universal ribosomal protein uS14 family. Part of the 30S ribosomal subunit.

It is found in the plastid. It localises to the chloroplast. Its function is as follows. Binds 16S rRNA, required for the assembly of 30S particles. This is Small ribosomal subunit protein uS14c from Psilotum nudum (Whisk fern).